The chain runs to 594 residues: Probable translation initiation factor IF-2 (594 aa).

One can recognise a tr-type G domain in the interval 5–224 (YRAPIVVVVG…LMAGLTQRLV (220 aa)). Residues 14–21 (GHVDVGKT) are G1. 14–21 (GHVDVGKT) is a binding site for GTP. A G2 region spans residues 39–43 (MITQH). A G3 region spans residues 80-83 (DTPG). GTP contacts are provided by residues 80–84 (DTPGH) and 134–137 (NKVD). Positions 134–137 (NKVD) are G4. The interval 202–204 (SAV) is G5.

This sequence belongs to the TRAFAC class translation factor GTPase superfamily. Classic translation factor GTPase family. IF-2 subfamily.

In terms of biological role, function in general translation initiation by promoting the binding of the formylmethionine-tRNA to ribosomes. Seems to function along with eIF-2. This is Probable translation initiation factor IF-2 from Caldivirga maquilingensis (strain ATCC 700844 / DSM 13496 / JCM 10307 / IC-167).